Consider the following 395-residue polypeptide: Gastric triacylglycerol lipase (395 aa).

The signal sequence occupies residues 1–18 (MWLLLITSVISTFGGAHG). N33, N68, and N98 each carry an N-linked (GlcNAc...) asparagine glycan. The AB hydrolase-1 domain occupies 77 to 376 (PVVYLQHGLI…LAYNHLDFIW (300 aa)). The active-site Nucleophile is the S171. C245 and C254 are joined by a disulfide. N270 carries N-linked (GlcNAc...) asparagine glycosylation. Active-site charge relay system residues include D342 and H371.

Belongs to the AB hydrolase superfamily. Lipase family. In terms of tissue distribution, secreted by the serous (von Ebner's) glands at the back of the rat tongue.

The protein resides in the secreted. It carries out the reaction a triacylglycerol + H2O = a diacylglycerol + a fatty acid + H(+). It catalyses the reaction 1,2,3-tri-(9Z-octadecenoyl)-glycerol + H2O = 1,2-di-(9Z-octadecenoyl)-sn-glycerol + (9Z)-octadecenoate + H(+). The catalysed reaction is 1,2,3-trioctanoylglycerol + H2O = 1,2-dioctanoyl-sn-glycerol + octanoate + H(+). Catalyzes the hydrolysis of triacylglycerols to yield free fatty acids, diacylglycerol, monoacylglycerol, and glycerol. Shows a preferential hydrolysis at the sn-3 position of triacylglycerol. This Rattus norvegicus (Rat) protein is Gastric triacylglycerol lipase (Lipf).